Consider the following 288-residue polypeptide: Acetyl-coenzyme A carboxylase carboxyl transferase subunit beta (288 aa).

Positions 32–288 (LFAKCPACKH…LELHTEVENV (257 aa)) constitute a CoA carboxyltransferase N-terminal domain. Positions 36, 39, 54, and 57 each coordinate Zn(2+). The segment at 36–57 (CPACKHTIYQKDLGKNKVCPNC) adopts a C4-type zinc-finger fold.

This sequence belongs to the AccD/PCCB family. In terms of assembly, acetyl-CoA carboxylase is a heterohexamer composed of biotin carboxyl carrier protein (AccB), biotin carboxylase (AccC) and two subunits each of ACCase subunit alpha (AccA) and ACCase subunit beta (AccD). It depends on Zn(2+) as a cofactor.

The protein resides in the cytoplasm. The catalysed reaction is N(6)-carboxybiotinyl-L-lysyl-[protein] + acetyl-CoA = N(6)-biotinyl-L-lysyl-[protein] + malonyl-CoA. It participates in lipid metabolism; malonyl-CoA biosynthesis; malonyl-CoA from acetyl-CoA: step 1/1. Component of the acetyl coenzyme A carboxylase (ACC) complex. Biotin carboxylase (BC) catalyzes the carboxylation of biotin on its carrier protein (BCCP) and then the CO(2) group is transferred by the transcarboxylase to acetyl-CoA to form malonyl-CoA. The polypeptide is Acetyl-coenzyme A carboxylase carboxyl transferase subunit beta (Lactococcus lactis subsp. cremoris (strain MG1363)).